We begin with the raw amino-acid sequence, 209 residues long: Ribosomal RNA large subunit methyltransferase E (209 aa).

Gly-63, Trp-65, Asp-83, Asp-99, and Asp-124 together coordinate S-adenosyl-L-methionine. The active-site Proton acceptor is Lys-164.

This sequence belongs to the class I-like SAM-binding methyltransferase superfamily. RNA methyltransferase RlmE family.

The protein localises to the cytoplasm. The enzyme catalyses uridine(2552) in 23S rRNA + S-adenosyl-L-methionine = 2'-O-methyluridine(2552) in 23S rRNA + S-adenosyl-L-homocysteine + H(+). Functionally, specifically methylates the uridine in position 2552 of 23S rRNA at the 2'-O position of the ribose in the fully assembled 50S ribosomal subunit. In Shewanella woodyi (strain ATCC 51908 / MS32), this protein is Ribosomal RNA large subunit methyltransferase E.